Here is a 227-residue protein sequence, read N- to C-terminus: ATP-dependent dethiobiotin synthetase BioD (227 aa).

13-18 (NIGKTI) is a binding site for ATP. A Mg(2+)-binding site is contributed by threonine 17. The active site involves lysine 38. Substrate is bound at residue serine 42. Residues aspartate 55, 117–120 (EGFG), 177–178 (NH), 206–208 (PFI), and asparagine 213 contribute to the ATP site. The Mg(2+) site is built by aspartate 55 and glutamate 117.

It belongs to the dethiobiotin synthetase family. Homodimer. The cofactor is Mg(2+).

The protein resides in the cytoplasm. The catalysed reaction is (7R,8S)-7,8-diammoniononanoate + CO2 + ATP = (4R,5S)-dethiobiotin + ADP + phosphate + 3 H(+). It participates in cofactor biosynthesis; biotin biosynthesis; biotin from 7,8-diaminononanoate: step 1/2. Catalyzes a mechanistically unusual reaction, the ATP-dependent insertion of CO2 between the N7 and N8 nitrogen atoms of 7,8-diaminopelargonic acid (DAPA, also called 7,8-diammoniononanoate) to form a ureido ring. This Wigglesworthia glossinidia brevipalpis protein is ATP-dependent dethiobiotin synthetase BioD.